Reading from the N-terminus, the 89-residue chain is Large ribosomal subunit protein bL31B (89 aa).

It belongs to the bacterial ribosomal protein bL31 family. Type B subfamily. Part of the 50S ribosomal subunit.

This chain is Large ribosomal subunit protein bL31B, found in Aeromonas salmonicida (strain A449).